The primary structure comprises 240 residues: Ribonuclease 3 (240 aa).

The RNase III domain occupies 13-143 (DHASLLEALG…LLGAVHLQHG (131 aa)). A Mg(2+)-binding site is contributed by Glu53. Asp57 is a catalytic residue. 2 residues coordinate Mg(2+): Asp129 and Glu132. The active site involves Glu132. Residues 170 to 238 (DWKTSLQELT…AGAAYQALTA (69 aa)) enclose the DRBM domain.

The protein belongs to the ribonuclease III family. In terms of assembly, homodimer. It depends on Mg(2+) as a cofactor.

It is found in the cytoplasm. The catalysed reaction is Endonucleolytic cleavage to 5'-phosphomonoester.. Digests double-stranded RNA. Involved in the processing of primary rRNA transcript to yield the immediate precursors to the large and small rRNAs (23S and 16S). Processes some mRNAs, and tRNAs when they are encoded in the rRNA operon. Processes pre-crRNA and tracrRNA of type II CRISPR loci if present in the organism. This chain is Ribonuclease 3, found in Nocardia farcinica (strain IFM 10152).